We begin with the raw amino-acid sequence, 180 residues long: Oligoribonuclease (180 aa).

Residues 7-170 form the Exonuclease domain; sequence LIWIDLEMTG…DDIRESIAEL (164 aa). Residue tyrosine 128 is part of the active site.

It belongs to the oligoribonuclease family.

Its subcellular location is the cytoplasm. 3'-to-5' exoribonuclease specific for small oligoribonucleotides. This chain is Oligoribonuclease, found in Pseudomonas fluorescens (strain Pf0-1).